A 458-amino-acid polypeptide reads, in one-letter code: Glycogen synthase (458 aa).

Position 15 (lysine 15) interacts with ADP-alpha-D-glucose.

Belongs to the glycosyltransferase 1 family. Bacterial/plant glycogen synthase subfamily.

It carries out the reaction [(1-&gt;4)-alpha-D-glucosyl](n) + ADP-alpha-D-glucose = [(1-&gt;4)-alpha-D-glucosyl](n+1) + ADP + H(+). The protein operates within glycan biosynthesis; glycogen biosynthesis. Its function is as follows. Synthesizes alpha-1,4-glucan chains using ADP-glucose. The chain is Glycogen synthase from Gloeobacter violaceus (strain ATCC 29082 / PCC 7421).